A 596-amino-acid polypeptide reads, in one-letter code: Nucleotidyltransferase lcsQ (596 aa).

A mitochondrion-targeting transit peptide spans 1–22 (MLLRLSPSRMALKRKLDSFLRN). A disordered region spans residues 475–504 (IVAHPGKPSQPADVPETPLSSGASKSKNLD).

The protein belongs to the tRNA nucleotidyltransferase/poly(A) polymerase family.

It localises to the mitochondrion. Functionally, nucleotidyltransferase; part of the gene cluster that mediates the biosynthesis of the lipopeptide antibiotics leucinostatins that show extensive biological activities, including antimalarial, antiviral, antibacterial, antifungal, and antitumor activities, as well as phytotoxic. The function of lcsQ within the leucinostatins biosynthesis has not been identified yet. The protein is Nucleotidyltransferase lcsQ of Purpureocillium lilacinum (Paecilomyces lilacinus).